The primary structure comprises 55 residues: Large ribosomal subunit protein bL33 (55 aa).

Belongs to the bacterial ribosomal protein bL33 family.

This chain is Large ribosomal subunit protein bL33, found in Xanthobacter autotrophicus (strain ATCC BAA-1158 / Py2).